The chain runs to 376 residues: Alkanesulfonate monooxygenase (376 aa).

Belongs to the SsuD family.

It carries out the reaction an alkanesulfonate + FMNH2 + O2 = an aldehyde + FMN + sulfite + H2O + 2 H(+). In terms of biological role, catalyzes the desulfonation of aliphatic sulfonates. The sequence is that of Alkanesulfonate monooxygenase from Bacillus licheniformis (strain ATCC 14580 / DSM 13 / JCM 2505 / CCUG 7422 / NBRC 12200 / NCIMB 9375 / NCTC 10341 / NRRL NRS-1264 / Gibson 46).